We begin with the raw amino-acid sequence, 328 residues long: Glucan endo-1,3-beta-glucosidase, basic isoform 3 (328 aa).

Glutamate 85 acts as the Proton donor in catalysis. Catalysis depends on glutamate 230, which acts as the Nucleophile. The propeptide at 306-328 (VSERVWDISAETNSTTSSLISEM) is removed in mature form. Asparagine 318 is a glycosylation site (N-linked (GlcNAc...) asparagine).

This sequence belongs to the glycosyl hydrolase 17 family.

It is found in the vacuole. The catalysed reaction is Hydrolysis of (1-&gt;3)-beta-D-glucosidic linkages in (1-&gt;3)-beta-D-glucans.. Functionally, is thought to be an important plant defense-related product against fungal pathogens. The protein is Glucan endo-1,3-beta-glucosidase, basic isoform 3 (GLUB3) of Solanum tuberosum (Potato).